The following is a 452-amino-acid chain: Ethanolamine kinase 1 (452 aa).

Positions 26-64 (AVQTRIGNSAASRRSPAARPPVPAPPALPRGRPGTEGST) are disordered. Positions 43-53 (ARPPVPAPPAL) are enriched in pro residues.

Belongs to the choline/ethanolamine kinase family. In terms of tissue distribution, expressed in kidney, liver, placenta, heart, leukocyte, ovary and testis.

It localises to the cytoplasm. It carries out the reaction ethanolamine + ATP = phosphoethanolamine + ADP + H(+). It participates in phospholipid metabolism; phosphatidylethanolamine biosynthesis; phosphatidylethanolamine from ethanolamine: step 1/3. In terms of biological role, highly specific for ethanolamine phosphorylation. May be a rate-controlling step in phosphatidylethanolamine biosynthesis. The chain is Ethanolamine kinase 1 from Homo sapiens (Human).